Reading from the N-terminus, the 351-residue chain is Phospho-N-acetylmuramoyl-pentapeptide-transferase (351 aa).

10 consecutive transmembrane segments (helical) span residues 22-42 (ILAF…FISW), 65-85 (TPTM…LITT), 87-107 (FNKY…LGFI), 128-148 (FLLQ…VGFD), 158-178 (YPIF…IVAM), 190-210 (GLAT…LYIV), 225-245 (LGVG…LGFL), 254-274 (VFMG…LAIV), 279-299 (LLLI…ILQV), and 328-348 (KITI…ILSI).

Belongs to the glycosyltransferase 4 family. MraY subfamily. The cofactor is Mg(2+).

The protein localises to the cell inner membrane. The enzyme catalyses UDP-N-acetyl-alpha-D-muramoyl-L-alanyl-gamma-D-glutamyl-meso-2,6-diaminopimeloyl-D-alanyl-D-alanine + di-trans,octa-cis-undecaprenyl phosphate = di-trans,octa-cis-undecaprenyl diphospho-N-acetyl-alpha-D-muramoyl-L-alanyl-D-glutamyl-meso-2,6-diaminopimeloyl-D-alanyl-D-alanine + UMP. The protein operates within cell wall biogenesis; peptidoglycan biosynthesis. Catalyzes the initial step of the lipid cycle reactions in the biosynthesis of the cell wall peptidoglycan: transfers peptidoglycan precursor phospho-MurNAc-pentapeptide from UDP-MurNAc-pentapeptide onto the lipid carrier undecaprenyl phosphate, yielding undecaprenyl-pyrophosphoryl-MurNAc-pentapeptide, known as lipid I. This chain is Phospho-N-acetylmuramoyl-pentapeptide-transferase, found in Nautilia profundicola (strain ATCC BAA-1463 / DSM 18972 / AmH).